Consider the following 259-residue polypeptide: Adenylosuccinate synthetase (259 aa).

GTP is bound by residues 3 to 9 and 31 to 33; these read GDEGKGK and GHT. Residue D4 is the Proton acceptor of the active site. Residues D4 and G31 each contribute to the Mg(2+) site. 4–7 is an IMP binding site; sequence DEGK. The Proton donor role is filled by H32. IMP-binding residues include T120, R134, Q215, and T230.

The protein belongs to the adenylosuccinate synthetase family. In terms of assembly, homodimer. It depends on Mg(2+) as a cofactor.

The protein localises to the cytoplasm. The enzyme catalyses IMP + L-aspartate + GTP = N(6)-(1,2-dicarboxyethyl)-AMP + GDP + phosphate + 2 H(+). It functions in the pathway purine metabolism; AMP biosynthesis via de novo pathway; AMP from IMP: step 1/2. Functionally, plays an important role in the de novo pathway of purine nucleotide biosynthesis. Catalyzes the first committed step in the biosynthesis of AMP from IMP. The chain is Adenylosuccinate synthetase from Aggregatibacter actinomycetemcomitans (Actinobacillus actinomycetemcomitans).